Reading from the N-terminus, the 631-residue chain is Leucine aminopeptidase 2-2 (631 aa).

Residues glutamine 140 to glutamine 142 and proline 265 to glutamate 270 contribute to the substrate site. Residue histidine 294 participates in Zn(2+) binding. Glutamate 295 acts as the Proton acceptor in catalysis. The Zn(2+) site is built by histidine 298 and glutamate 317. Tyrosine 395 serves as the catalytic Proton donor.

It belongs to the peptidase M1 family. It depends on Zn(2+) as a cofactor.

The protein resides in the cytoplasm. The protein localises to the nucleus. It catalyses the reaction an epoxide + H2O = an ethanediol. Functionally, aminopeptidase that preferentially cleaves di- and tripeptides. Also has low epoxide hydrolase activity (in vitro). Can hydrolyze the epoxide leukotriene LTA(4) but it forms preferentially 5,6-dihydroxy-7,9,11,14-eicosatetraenoic acid rather than the cytokine leukotriene B(4) as the product compared to the homologous mammalian enzyme (in vitro). This Meyerozyma guilliermondii (strain ATCC 6260 / CBS 566 / DSM 6381 / JCM 1539 / NBRC 10279 / NRRL Y-324) (Yeast) protein is Leucine aminopeptidase 2-2.